We begin with the raw amino-acid sequence, 205 residues long: MPLLCALLRSRLQPSLLRSLTLTSAQSLSCGGSRGVRTWSARTGPGACADPAVSVSKRARAEDDASLRFVRLSEHATAPTRGSARAAGYDLYSAYDYTIPSMEKALVKTDIQIAVPSGCYGRVAPRSGLAVKHFIDVGAGVIDEDYRGNVGVVLFNFGKEKFEVKKGDRIAQLICERILYPDLEEVQTLDNTERGSGGFGSTGKN.

S54 carries the post-translational modification Phosphoserine. Residues 126 to 128 (RSG), 140 to 143 (GVID), G151, and 199 to 200 (FG) contribute to the substrate site.

The protein belongs to the dUTPase family. In terms of assembly, homotrimer. The cofactor is Mg(2+). Expressed in all tissues examined. Higher levels in heart and kidney.

It is found in the cytoplasm. The protein localises to the nucleus. It carries out the reaction dUTP + H2O = dUMP + diphosphate + H(+). It participates in pyrimidine metabolism; dUMP biosynthesis; dUMP from dCTP (dUTP route): step 2/2. In terms of biological role, catalyzes the cleavage of 2'-deoxyuridine 5'-triphosphate (dUTP) into 2'-deoxyuridine 5'-monophosphate (dUMP) and inorganic pyrophosphate and through its action efficiently prevents uracil misincorporation into DNA and at the same time provides dUMP, the substrate for de novo thymidylate biosynthesis. Inhibits peroxisome proliferator-activated receptor (PPAR) activity by binding of its N-terminal to PPAR, preventing the latter's dimerization with retinoid X receptor. Essential for embryonic development. This Rattus norvegicus (Rat) protein is Deoxyuridine 5'-triphosphate nucleotidohydrolase (Dut).